A 536-amino-acid polypeptide reads, in one-letter code: Mannuronan C5-epimerase (536 aa).

The N-terminal stretch at M1–A36 is a signal peptide. PbH1 repeat units follow at residues T298–D320, S322–R345, V347–R369, S371–E393, and S394–N416. Residue H319 is the Proton acceptor of the active site.

Belongs to the D-mannuronate C5-epimerase family.

Its subcellular location is the periplasm. It catalyses the reaction [(1-&gt;4)-beta-D-mannuronosyl](n) = [alginate](n). The protein operates within glycan biosynthesis; alginate biosynthesis. Its function is as follows. Catalyzes the epimerization of beta-D-mannuronate to alpha-L-guluronate during the synthesis of the linear polysaccharide alginate. In addition, is part of a periplasmic protein complex that protects alginate from degradation by AlgL by channeling the newly formed alginate polymer through a scaffold that transfers the alginate polymer through the periplasmic space to the outer membrane secretin AlgE. This chain is Mannuronan C5-epimerase (algG), found in Pseudomonas syringae pv. tomato (strain ATCC BAA-871 / DC3000).